The following is a 79-amino-acid chain: Cytochrome c oxidase subunit 7A1, mitochondrial (79 aa).

The N-terminal 21 residues, 1-21 (MQALRVSRALIRSFNTTARNR), are a transit peptide targeting the mitochondrion. Residues 22-46 (FQNRVPEKQKLFQEDNDIPLYLKGG) lie on the Mitochondrial matrix side of the membrane. The chain crosses the membrane as a helical span at residues 47–75 (IVDNILYRVTMGLCLGGSAYSMYCLGWAS). Over 76 to 79 (FPRN) the chain is Mitochondrial intermembrane.

It belongs to the cytochrome c oxidase VIIa family. In terms of assembly, component of the complex IV (CIV, cytochrome c oxidase), a multisubunit enzyme composed of 14 subunits. The complex is composed of a catalytic core of 3 subunits MT-CO1, MT-CO2 and MT-CO3, encoded in the mitochondrial DNA, and 11 supernumerary subunits COX4I1 (or COX4I2), COX5A, COX5B, COX6A2 (or COX6A1), COX6B1 (or COX6B2), COX6C, COX7A1 (or COX7A2), COX7B, COX7C, COX8B and NDUFA4, which are encoded in the nuclear genome. The complex exists as a monomer or a dimer and forms supercomplexes (SCs) in the inner mitochondrial membrane with NADH-ubiquinone oxidoreductase (complex I, CI) and ubiquinol-cytochrome c oxidoreductase (cytochrome b-c1 complex, complex III, CIII), resulting in different assemblies (supercomplex SCI(1)III(2)IV(1) and megacomplex MCI(2)III(2)IV(2)).

Its subcellular location is the mitochondrion inner membrane. The protein operates within energy metabolism; oxidative phosphorylation. Its function is as follows. Component of the mitochondrial respiratory complex IV (CIV, also named cytochrome c oxidase complex), the last enzyme in the mitochondrial electron transport chain which drives oxidative phosphorylation. The CIV complex is the component of the respiratory chain that catalyzes the reduction of oxygen to water. Acts as an assembly factor that specifically drives the homodimerization of CIV complexes, mediating the formation of mitochondrial respiratory supercomplexes (respirasomes) containing two CIV: supercomplxes with two molecules of CIV show improved activity. Despite being highly expressed in brown adipose tissue, not required for thermogenesis. The polypeptide is Cytochrome c oxidase subunit 7A1, mitochondrial (COX7A1) (Trachypithecus cristatus (Silvered leaf-monkey)).